The following is a 325-amino-acid chain: Probable NADH kinase (325 aa).

This sequence belongs to the NAD kinase family. As to quaternary structure, homodimer.

The protein resides in the cytoplasm. It carries out the reaction NADH + ATP = ADP + NADPH + H(+). Functionally, key source of the cellular reductant NADPH which is an important antioxidant factor. The protein is Probable NADH kinase of Oryza sativa subsp. japonica (Rice).